Here is a 276-residue protein sequence, read N- to C-terminus: Rhomboid protease GlpG (276 aa).

6 helical membrane passes run 94 to 114, 142 to 162, 169 to 189, 192 to 212, 229 to 249, and 252 to 272; these read GPFT…QNLL, AFMH…WYLG, IGSG…GFVQ, FSGP…GYVW, LILF…GMAI, and GAHV…TLHG. The active-site Nucleophile is Ser-201. Residue His-254 is part of the active site.

This sequence belongs to the peptidase S54 family.

It is found in the cell inner membrane. The catalysed reaction is Cleaves type-1 transmembrane domains using a catalytic dyad composed of serine and histidine that are contributed by different transmembrane domains.. In terms of biological role, rhomboid-type serine protease that catalyzes intramembrane proteolysis. The chain is Rhomboid protease GlpG from Klebsiella pneumoniae (strain 342).